We begin with the raw amino-acid sequence, 131 residues long: Runt-related transcription factor 2 (131 aa).

Positions 1–10 constitute a Runt domain; the sequence is MRVGVPPQIP. The interval 1–75 is disordered; sequence MRVGVPPQIP…SSTRGTGLPV (75 aa). At Arg-11 the chain carries Asymmetric dimethylarginine. Composition is skewed to polar residues over residues 13-36 and 43-70; these read SLNS…RQAQ and YDQS…STRG.

In terms of assembly, heterodimer of an alpha and a beta subunit. The alpha subunit binds DNA as a monomer and through the Runt domain. DNA-binding is increased by heterodimerization. Interacts with XRCC6 (Ku70) and XRCC5 (Ku80). Interacts with CCNB1, KAT6A and KAT6B. Interacts with HIVEP3. Interacts with IFI204. Interaction with SATB2; the interaction results in enhanced DNA binding and transactivation by these transcription factors. Binds to HIPK3. Interacts with FOXO1 (via a C-terminal region); the interaction inhibits RUNX2 transcriptional activity towards BGLAP. This interaction is prevented on insulin or IGF1 stimulation as FOXO1 is exported from the nucleus. Interacts with FOXP3. Interacts with TMEM119. Interacts with OLFM2. Interacts with IPO7; the interaction inhibits RUNX2 nuclear translocation in osteoblasts. Phosphorylated; probably by MAP kinases (MAPK). Phosphorylation by HIPK3 is required for the SPEN/MINT and FGF2 transactivation during osteoblastic differentiation.

The protein localises to the nucleus. Its subcellular location is the cytoplasm. In terms of biological role, transcription factor involved in osteoblastic differentiation and skeletal morphogenesis. Essential for the maturation of osteoblasts and both intramembranous and endochondral ossification. CBF binds to the core site, 5'-PYGPYGGT-3', of a number of enhancers and promoters, including murine leukemia virus, polyomavirus enhancer, T-cell receptor enhancers, osteocalcin, osteopontin, bone sialoprotein, alpha 1(I) collagen, LCK, IL-3 and GM-CSF promoters. Inhibits KAT6B-dependent transcriptional activation. In osteoblasts, supports transcription activation: synergizes with SPEN/MINT to enhance FGFR2-mediated activation of the osteocalcin FGF-responsive element (OCFRE). The protein is Runt-related transcription factor 2 (RUNX2) of Equus caballus (Horse).